The chain runs to 355 residues: Nuclear speckle splicing regulatory protein 1 homolog (355 aa).

Residues 1–57 form a disordered region; the sequence is MSGTGFRYGLNVMKKKKPNESSNRITFTEDDSSSSEQEHAPIPNSFSSQITAASDAS. The span at 44 to 54 shows a compositional bias: polar residues; that stretch reads NSFSSQITAAS. Positions 99-162 form a coiled coil; that stretch reads MENLIESAKK…EDRKEEDEKS (64 aa). 2 disordered regions span residues 253–292 and 325–355; these read SANN…HGTY and KIHA…ATNP. Positions 280 to 289 are enriched in basic and acidic residues; that stretch reads YHQDRPDKRH. The stretch at 293–326 forms a coiled coil; that stretch reads SLEEIDKQRKEFENRQRLQKEKEFQKSREAALKI. Polar residues predominate over residues 329–339; the sequence is SRNTTETQVQS. A compositionally biased stretch (basic residues) spans 346–355; it reads QRKKKAATNP.

This sequence belongs to the NSRP1 family.

This is Nuclear speckle splicing regulatory protein 1 homolog from Schizosaccharomyces pombe (strain 972 / ATCC 24843) (Fission yeast).